We begin with the raw amino-acid sequence, 470 residues long: Poly(A) polymerase catalytic subunit (470 aa).

Active-site residues include Asp192 and Asp194.

This sequence belongs to the poxviridae poly(A) polymerase catalytic subunit family. Heterodimer of a large (catalytic) subunit and a small (regulatory) subunit.

The catalysed reaction is RNA(n) + ATP = RNA(n)-3'-adenine ribonucleotide + diphosphate. Functionally, polymerase that creates the 3'-poly(A) tail of mRNA's. The polypeptide is Poly(A) polymerase catalytic subunit (PAPL) (Homo sapiens (Human)).